Consider the following 565-residue polypeptide: NAD-dependent malic enzyme (565 aa).

Residue Y104 is the Proton donor of the active site. R157 is an NAD(+) binding site. K175 (proton acceptor) is an active-site residue. A divalent metal cation-binding residues include E246, D247, and D270. NAD(+) contacts are provided by D270 and N418.

Belongs to the malic enzymes family. In terms of assembly, homotetramer. Mg(2+) is required as a cofactor. The cofactor is Mn(2+).

It catalyses the reaction (S)-malate + NAD(+) = pyruvate + CO2 + NADH. The enzyme catalyses oxaloacetate + H(+) = pyruvate + CO2. The protein is NAD-dependent malic enzyme of Yersinia pseudotuberculosis serotype O:1b (strain IP 31758).